We begin with the raw amino-acid sequence, 638 residues long: ABC transporter G family member 12 (638 aa).

The segment at 42 to 61 is disordered; the sequence is KQEKAKKKNDTESSTGDMNT. In terms of domain architecture, ABC transporter spans 58 to 301; that stretch reads DMNTGVSTTI…SLGYPCPNNT (244 aa). Residue 91–98 participates in ATP binding; the sequence is GPSGSGKS. Residues 374 to 633 enclose the ABC transmembrane type-2 domain; the sequence is GNFVARVGTA…WTSYLALHFL (260 aa). 7 consecutive transmembrane segments (helical) span residues 376 to 396, 410 to 430, 459 to 479, 484 to 504, 516 to 536, 544 to 564, and 612 to 632; these read FVAR…CFAG, TIFF…SLFL, TLIV…FAHL, GHFF…DFMI, MTFA…GFYV, SFGW…LVVN, and FGVV…ALHF.

It belongs to the ABC transporter superfamily. ABCG family. Eye pigment precursor importer (TC 3.A.1.204) subfamily.

The protein resides in the membrane. This Dictyostelium discoideum (Social amoeba) protein is ABC transporter G family member 12 (abcG12).